Here is a 158-residue protein sequence, read N- to C-terminus: NAD(P)H-quinone oxidoreductase subunit J, chloroplastic (158 aa).

This sequence belongs to the complex I 30 kDa subunit family. NDH is composed of at least 16 different subunits, 5 of which are encoded in the nucleus.

The protein localises to the plastid. It localises to the chloroplast thylakoid membrane. It catalyses the reaction a plastoquinone + NADH + (n+1) H(+)(in) = a plastoquinol + NAD(+) + n H(+)(out). It carries out the reaction a plastoquinone + NADPH + (n+1) H(+)(in) = a plastoquinol + NADP(+) + n H(+)(out). Its function is as follows. NDH shuttles electrons from NAD(P)H:plastoquinone, via FMN and iron-sulfur (Fe-S) centers, to quinones in the photosynthetic chain and possibly in a chloroplast respiratory chain. The immediate electron acceptor for the enzyme in this species is believed to be plastoquinone. Couples the redox reaction to proton translocation, and thus conserves the redox energy in a proton gradient. The polypeptide is NAD(P)H-quinone oxidoreductase subunit J, chloroplastic (Chloranthus spicatus (Chulantree)).